A 45-amino-acid chain; its full sequence is Photosystem II reaction center protein K (45 aa).

A propeptide spanning residues 1-8 (MEAVFLLA) is cleaved from the precursor. Residues 24 to 44 (LPVIPVFFLALAFVWQAAVGF) traverse the membrane as a helical segment.

This sequence belongs to the PsbK family. In terms of assembly, PSII is composed of 1 copy each of membrane proteins PsbA, PsbB, PsbC, PsbD, PsbE, PsbF, PsbH, PsbI, PsbJ, PsbK, PsbL, PsbM, PsbT, PsbX, PsbY, PsbZ, Psb30/Ycf12, peripheral proteins PsbO, CyanoQ (PsbQ), PsbU, PsbV and a large number of cofactors. It forms dimeric complexes.

Its subcellular location is the cellular thylakoid membrane. Its function is as follows. One of the components of the core complex of photosystem II (PSII). PSII is a light-driven water:plastoquinone oxidoreductase that uses light energy to abstract electrons from H(2)O, generating O(2) and a proton gradient subsequently used for ATP formation. It consists of a core antenna complex that captures photons, and an electron transfer chain that converts photonic excitation into a charge separation. The chain is Photosystem II reaction center protein K from Crocosphaera subtropica (strain ATCC 51142 / BH68) (Cyanothece sp. (strain ATCC 51142)).